The sequence spans 1030 residues: Beta-galactosidase (1030 aa).

Substrate is bound by residues N99 and D197. D197 lines the Na(+) pocket. Mg(2+) contacts are provided by E411, H413, and E456. Substrate is bound by residues E456 and E532–H535. The active-site Proton donor is E456. E532 (nucleophile) is an active-site residue. N592 is a binding site for Mg(2+). F596 and N599 together coordinate Na(+). Substrate is bound by residues N599 and W1004.

It belongs to the glycosyl hydrolase 2 family. As to quaternary structure, homotetramer. Mg(2+) is required as a cofactor. Requires Na(+) as cofactor.

The enzyme catalyses Hydrolysis of terminal non-reducing beta-D-galactose residues in beta-D-galactosides.. In Photobacterium profundum (strain SS9), this protein is Beta-galactosidase.